The sequence spans 440 residues: T-box transcription factor TBX20 (440 aa).

Positions 103 to 282 (LWDKFHDLGT…SNPFAKGFRD (180 aa)) form a DNA-binding region, T-box.

It is found in the nucleus. In terms of biological role, transcriptional regulator that may be involved in heart developmental processes. The sequence is that of T-box transcription factor TBX20 (tbx20) from Xenopus tropicalis (Western clawed frog).